Consider the following 364-residue polypeptide: Probable protein phosphatase methylesterase 1 (364 aa).

Residues Met1–Met53 are disordered. Residues Asp11–His23 are compositionally biased toward polar residues. Active-site residues include Ser164, Asp190, and His316.

The protein belongs to the AB hydrolase superfamily.

It carries out the reaction [phosphatase 2A protein]-C-terminal L-leucine methyl ester + H2O = [phosphatase 2A protein]-C-terminal L-leucine + methanol + H(+). Its function is as follows. Demethylates proteins that have been reversibly carboxymethylated. The protein is Probable protein phosphatase methylesterase 1 of Caenorhabditis elegans.